We begin with the raw amino-acid sequence, 233 residues long: Fibrillarin-like rRNA/tRNA 2'-O-methyltransferase (233 aa).

S-adenosyl-L-methionine is bound by residues 89 to 90 (TT), 108 to 109 (EF), 133 to 134 (DA), and 153 to 156 (DIAQ).

It belongs to the methyltransferase superfamily. Fibrillarin family. In terms of assembly, interacts with nop5. Component of box C/D small ribonucleoprotein (sRNP) particles that contain rpl7ae, FlpA and nop5, plus a guide RNA.

Involved in pre-rRNA and tRNA processing. Utilizes the methyl donor S-adenosyl-L-methionine to catalyze the site-specific 2'-hydroxyl methylation of ribose moieties in rRNA and tRNA. Site specificity is provided by a guide RNA that base pairs with the substrate. Methylation occurs at a characteristic distance from the sequence involved in base pairing with the guide RNA. In Sulfurisphaera tokodaii (strain DSM 16993 / JCM 10545 / NBRC 100140 / 7) (Sulfolobus tokodaii), this protein is Fibrillarin-like rRNA/tRNA 2'-O-methyltransferase.